Reading from the N-terminus, the 113-residue chain is UPF0122 protein LCA_0713 (113 aa).

This sequence belongs to the UPF0122 family.

Functionally, might take part in the signal recognition particle (SRP) pathway. This is inferred from the conservation of its genetic proximity to ftsY/ffh. May be a regulatory protein. This is UPF0122 protein LCA_0713 from Latilactobacillus sakei subsp. sakei (strain 23K) (Lactobacillus sakei subsp. sakei).